The chain runs to 166 residues: Phosphopantetheine adenylyltransferase (166 aa).

Serine 11 contacts substrate. ATP-binding positions include 11 to 12 and histidine 19; that span reads SF. Positions 43, 80, and 94 each coordinate substrate. ATP contacts are provided by residues 95-97, glutamate 105, and 130-136; these read GLR and VRTITAT.

It belongs to the bacterial CoaD family. As to quaternary structure, homohexamer. Mg(2+) is required as a cofactor.

It is found in the cytoplasm. The enzyme catalyses (R)-4'-phosphopantetheine + ATP + H(+) = 3'-dephospho-CoA + diphosphate. It functions in the pathway cofactor biosynthesis; coenzyme A biosynthesis; CoA from (R)-pantothenate: step 4/5. Reversibly transfers an adenylyl group from ATP to 4'-phosphopantetheine, yielding dephospho-CoA (dPCoA) and pyrophosphate. In Mesorhizobium japonicum (strain LMG 29417 / CECT 9101 / MAFF 303099) (Mesorhizobium loti (strain MAFF 303099)), this protein is Phosphopantetheine adenylyltransferase.